The following is a 270-amino-acid chain: Photosystem I chlorophyll a/b-binding protein 6, chloroplastic (270 aa).

A chloroplast-targeting transit peptide spans 1–33; that stretch reads MAFAIASALTSTLTLSTSRVQNPTQRRPHVAST. Positions 16 to 36 are disordered; it reads STSRVQNPTQRRPHVASTSST. Over residues 19-36 the composition is skewed to polar residues; sequence RVQNPTQRRPHVASTSST. W68 is a chlorophyll b binding site. Chlorophyll a contacts are provided by F88 and E107. Chlorophyll b is bound at residue R112. The chain crosses the membrane as a helical span at residues 146 to 164; sequence YFADSTTLFVAQMVLMGWA. E165 and R168 together coordinate chlorophyll b. K221, E222, N225, R227, Q239, and H254 together coordinate chlorophyll a. A helical membrane pass occupies residues 228–244; the sequence is LAMLAFLGFCFQATYTS.

Belongs to the light-harvesting chlorophyll a/b-binding (LHC) protein family. In terms of assembly, the LHC complex consists of chlorophyll a-b binding proteins. Homodimer. Binds pigments. Element of the NAD(P)H dehydrogenase-photosystem I supercomplex (NDH-PSI). Requires Binds at least 14 chlorophylls (8 Chl-a and 6 Chl-b) and carotenoids such as lutein and neoxanthin. as cofactor. Post-translationally, photoregulated by reversible phosphorylation of its threonine residues.

It localises to the plastid. The protein localises to the chloroplast thylakoid membrane. Its function is as follows. The light-harvesting complex (LHC) functions as a light receptor, it captures and delivers excitation energy to photosystems with which it is closely associated. Seems involved in the function of the photosystem I in low light conditions, when other LHCA proteins are less abundant. Required, together with LHCA5, for the formation of a full-size NAD(P)H dehydrogenase-photosystem I supercomplex (NDH-PSI) that triggers cyclic and chlororespiratory electron transport in chloroplast thylakoids, especially under stress conditions (e.g. increased light intensity). The protein is Photosystem I chlorophyll a/b-binding protein 6, chloroplastic of Arabidopsis thaliana (Mouse-ear cress).